The primary structure comprises 448 residues: Tubulin beta chain (448 aa).

Residues glutamine 11, glutamate 69, serine 138, glycine 142, threonine 143, glycine 144, asparagine 204, and asparagine 226 each contribute to the GTP site. Residue glutamate 69 coordinates Mg(2+). The tract at residues 425-448 is disordered; sequence YQDASISEGEEEYLEEEEPLEHEE. The span at 432 to 448 shows a compositional bias: acidic residues; the sequence is EGEEEYLEEEEPLEHEE.

It belongs to the tubulin family. In terms of assembly, dimer of alpha and beta chains. A typical microtubule is a hollow water-filled tube with an outer diameter of 25 nm and an inner diameter of 15 nM. Alpha-beta heterodimers associate head-to-tail to form protofilaments running lengthwise along the microtubule wall with the beta-tubulin subunit facing the microtubule plus end conferring a structural polarity. Microtubules usually have 13 protofilaments but different protofilament numbers can be found in some organisms and specialized cells. It depends on Mg(2+) as a cofactor.

The protein resides in the cytoplasm. It localises to the cytoskeleton. Tubulin is the major constituent of microtubules, a cylinder consisting of laterally associated linear protofilaments composed of alpha- and beta-tubulin heterodimers. Microtubules grow by the addition of GTP-tubulin dimers to the microtubule end, where a stabilizing cap forms. Below the cap, tubulin dimers are in GDP-bound state, owing to GTPase activity of alpha-tubulin. The sequence is that of Tubulin beta chain (benR) from Aspergillus parasiticus.